The primary structure comprises 268 residues: Glucosamine-6-phosphate deaminase (268 aa).

The Proton acceptor; for enolization step role is filled by D72. The For ring-opening step role is filled by D141. H143 functions as the Proton acceptor; for ring-opening step in the catalytic mechanism. E148 functions as the For ring-opening step in the catalytic mechanism.

Belongs to the glucosamine/galactosamine-6-phosphate isomerase family. NagB subfamily.

It carries out the reaction alpha-D-glucosamine 6-phosphate + H2O = beta-D-fructose 6-phosphate + NH4(+). It functions in the pathway amino-sugar metabolism; N-acetylneuraminate degradation; D-fructose 6-phosphate from N-acetylneuraminate: step 5/5. Allosterically activated by N-acetylglucosamine 6-phosphate (GlcNAc6P). Its function is as follows. Catalyzes the reversible isomerization-deamination of glucosamine 6-phosphate (GlcN6P) to form fructose 6-phosphate (Fru6P) and ammonium ion. The protein is Glucosamine-6-phosphate deaminase of Borreliella afzelii (strain PKo) (Borrelia afzelii).